The primary structure comprises 648 residues: Threonine--tRNA ligase (648 aa).

Positions 1–63 constitute a TGS domain; the sequence is MTEINIEFPD…NENVKIEIVT (63 aa). Positions 243 to 541 are catalytic; the sequence is DHRVIGNNLD…LIEMYKGAFP (299 aa). Residues Cys-337, His-388, and His-518 each contribute to the Zn(2+) site.

It belongs to the class-II aminoacyl-tRNA synthetase family. As to quaternary structure, homodimer. Zn(2+) is required as a cofactor.

It is found in the cytoplasm. The catalysed reaction is tRNA(Thr) + L-threonine + ATP = L-threonyl-tRNA(Thr) + AMP + diphosphate + H(+). Catalyzes the attachment of threonine to tRNA(Thr) in a two-step reaction: L-threonine is first activated by ATP to form Thr-AMP and then transferred to the acceptor end of tRNA(Thr). Also edits incorrectly charged L-seryl-tRNA(Thr). In Pediococcus pentosaceus (strain ATCC 25745 / CCUG 21536 / LMG 10740 / 183-1w), this protein is Threonine--tRNA ligase.